The sequence spans 435 residues: Gamma-glutamyl phosphate reductase (435 aa).

The protein belongs to the gamma-glutamyl phosphate reductase family.

Its subcellular location is the cytoplasm. It catalyses the reaction L-glutamate 5-semialdehyde + phosphate + NADP(+) = L-glutamyl 5-phosphate + NADPH + H(+). Its pathway is amino-acid biosynthesis; L-proline biosynthesis; L-glutamate 5-semialdehyde from L-glutamate: step 2/2. Its function is as follows. Catalyzes the NADPH-dependent reduction of L-glutamate 5-phosphate into L-glutamate 5-semialdehyde and phosphate. The product spontaneously undergoes cyclization to form 1-pyrroline-5-carboxylate. This is Gamma-glutamyl phosphate reductase from Bradyrhizobium diazoefficiens (strain JCM 10833 / BCRC 13528 / IAM 13628 / NBRC 14792 / USDA 110).